The primary structure comprises 337 residues: 4-hydroxyproline 2-epimerase 2 (337 aa).

Catalysis depends on cysteine 90, which acts as the Proton acceptor. Residues 91–92, histidine 223, and aspartate 249 each bind substrate; that span reads GH. Cysteine 253 acts as the Proton donor in catalysis. 254–255 contacts substrate; the sequence is GT.

This sequence belongs to the proline racemase family.

The catalysed reaction is trans-4-hydroxy-L-proline = cis-4-hydroxy-D-proline. In terms of biological role, catalyzes the epimerization of trans-4-hydroxy-L-proline (t4LHyp) to cis-4-hydroxy-D-proline (c4DHyp). Is likely involved in a degradation pathway that converts t4LHyp to alpha-ketoglutarate. Can also catalyze the epimerization of trans-3-hydroxy-L-proline (t3LHyp) to cis-3-hydroxy-D-proline (c3DHyp), albeit with 170-fold lower efficiency. Displays no proline racemase activity. The sequence is that of 4-hydroxyproline 2-epimerase 2 from Brucella anthropi (strain ATCC 49188 / DSM 6882 / CCUG 24695 / JCM 21032 / LMG 3331 / NBRC 15819 / NCTC 12168 / Alc 37) (Ochrobactrum anthropi).